We begin with the raw amino-acid sequence, 58 residues long: Large ribosomal subunit protein uL30 (58 aa).

Belongs to the universal ribosomal protein uL30 family. As to quaternary structure, part of the 50S ribosomal subunit.

This Pseudomonas aeruginosa (strain LESB58) protein is Large ribosomal subunit protein uL30.